The following is a 130-amino-acid chain: Small ribosomal subunit protein uS8 (130 aa).

It belongs to the universal ribosomal protein uS8 family. As to quaternary structure, part of the 30S ribosomal subunit.

Functionally, one of the primary rRNA binding proteins, it binds directly to 16S rRNA central domain where it helps coordinate assembly of the platform of the 30S subunit. This chain is Small ribosomal subunit protein uS8, found in Pyrobaculum calidifontis (strain DSM 21063 / JCM 11548 / VA1).